The following is a 213-amino-acid chain: LexA repressor (213 aa).

The H-T-H motif DNA-binding region spans 31 to 51 (RAEISRELGFRSPNAAEEYLK). Catalysis depends on for autocatalytic cleavage activity residues Ser-129 and Lys-166.

It belongs to the peptidase S24 family. In terms of assembly, homodimer.

It carries out the reaction Hydrolysis of Ala-|-Gly bond in repressor LexA.. Represses a number of genes involved in the response to DNA damage (SOS response), including recA and lexA. In the presence of single-stranded DNA, RecA interacts with LexA causing an autocatalytic cleavage which disrupts the DNA-binding part of LexA, leading to derepression of the SOS regulon and eventually DNA repair. This is LexA repressor from Mannheimia succiniciproducens (strain KCTC 0769BP / MBEL55E).